A 509-amino-acid chain; its full sequence is Maturase K (509 aa).

It belongs to the intron maturase 2 family. MatK subfamily.

Its subcellular location is the plastid. It localises to the chloroplast. Usually encoded in the trnK tRNA gene intron. Probably assists in splicing its own and other chloroplast group II introns. The polypeptide is Maturase K (Schlumbergera truncata (Thanksgiving cactus)).